A 219-amino-acid chain; its full sequence is RPA-interacting protein (219 aa).

Serine 18 carries the phosphoserine modification. Lysine 121 participates in a covalent cross-link: Glycyl lysine isopeptide (Lys-Gly) (interchain with G-Cter in SUMO); in isoform 2. Residues 137-212 (CPVCTKYNLR…SSLLMSCLAC (76 aa)) form an RIP-type zinc finger. The tract at residues 164 to 180 (SSELTEQKLRACLEGSI) is mediates nuclear export.

As to quaternary structure, interacts with the RPA1 subunit of RPA complex. Post-translationally, sumoylated. Sumoylation is required for localization in the nuclear PML body and transport of RPA complex in PML body. Upon UV irradiation and during S phase, it is desumoylated, releasing RPA complex that is translocated to sites of DNA damage. Sumoylation takes place at different Lys residues. Variant 'Lys-103' adds a sumoylation site and increases total sumoylation levels. In terms of tissue distribution, widely expressed. Expressed in pancreas, kidney, muscle, liver, lung, placenta, brain, heart, leukocytes, colon, intestine, ovary, testis, prostate, thymus and spleen.

It is found in the cytoplasm. Its subcellular location is the nucleus. It localises to the PML body. Its function is as follows. Mediates the import of RPA complex into the nucleus, possibly via some interaction with importin beta. Isoform 2 is sumoylated and mediates the localization of RPA complex into the PML body of the nucleus, thereby participating in RPA function in DNA metabolism. The sequence is that of RPA-interacting protein (RPAIN) from Homo sapiens (Human).